The sequence spans 117 residues: Large ribosomal subunit protein uL22 (117 aa).

The protein belongs to the universal ribosomal protein uL22 family. As to quaternary structure, part of the 50S ribosomal subunit.

In terms of biological role, this protein binds specifically to 23S rRNA; its binding is stimulated by other ribosomal proteins, e.g. L4, L17, and L20. It is important during the early stages of 50S assembly. It makes multiple contacts with different domains of the 23S rRNA in the assembled 50S subunit and ribosome. Functionally, the globular domain of the protein is located near the polypeptide exit tunnel on the outside of the subunit, while an extended beta-hairpin is found that lines the wall of the exit tunnel in the center of the 70S ribosome. In Leptospira biflexa serovar Patoc (strain Patoc 1 / ATCC 23582 / Paris), this protein is Large ribosomal subunit protein uL22.